We begin with the raw amino-acid sequence, 1399 residues long: MKDLLNLLKNQGQVEEFDAIRIGLASPEMIRSWSFGEVKKPETINYRTFKPERDGLFCAKIFGPVKDYECLCGKYKRLKHRGVICEKCGVEVALAKVRRERMAHIELASPVAHIWFLKSLPSRIGLLMDMTLRDIERVLYFESYVVIDPGMTTLEKGQLLNDEQYFEALEEFGDDFDARMGAEAVRELLHAIDLEHEIGRLREEIPQTNSETKIKKLSKRLKLMEAFQGSGNLPEWMVLTVLPVLPPDLRPLVPLDGGRFATSDLNDLYRRVINRNNRLKRLLDLSAPDIIVRNEKRMLQEAVDALLDNGRRGRAITGSNKRPLKSLADMIKGKQGRFRQNLLGKRVDYSGRSVITVGPTLRLHQCGLPKKMALELFKPFIFGKLEMRGLATTIKAAKKMVERELPEVWDVLAEVIREHPVLLNRAPTLHRLGIQAFEPVLIEGKAIQLHPLVCAAYNADFDGDQMAVHVPLTLEAQLEARALMMSTNNILSPANGEPIIVPSQDVVLGLYYMTREAINAKGEGRVFADLQEVDRVFRAGEAALHAKVKVRIHETVNDRDGGSVKNTRIVDTTVGRALLFQVVPAGLSYDVVNQPMKKKAISKLINQCYRVVGLKETVIFADQLMYTGFAYSTISGVSIGVNDFVIPDEKARIIDAATEEVKEIESQYASGLVTQGEKYNKVIDLWSKANDEVSKAMMSNLSKERVIDRHGVEVDQESFNSMYMMADSGARGSAAQIRQLAGMRGLMAKPDGSIIETPITANFREGLSVLQYFISTHGARKGLADTALKTANSGYLTRRLVDVAQDLVVTEVDCGTEHGLLMTPHIEGGDVVEPLGERVLGRVIARDVFKPGTEDVIVPAGTLVDEKWVEFIELNSIDEVIVRSPISCETRYGICAKCYGRDLARGHQVNIGEAVGVIAAQSIGEPGTQLTMRTFHIGGAASRTSAADSVQVKNGGTVRLHNLKHVERVDGHLVAVSRSGELAIADDFGRERERYKLPYGAVISVKEGDKVDAGSIVAKWDPHTHPIVTEMKGTVTYVGMEEGITIKRQTDELTGMTNIEVLDAKDRPAAGKDIRPAVKMVGLDGKDLLLPGTDVPAQYFLPANALVGVADGAQIAIGDVIARIPQETSKTRDITGGLPRVADLFEARRPKEASILAEVSGTIAFGKETKGKRRLVITPNDGSDPYEELIPKWRHLNVFEGEQVNRGEVISDGPSDPHDILRLLGVSALAKYIVNEIQDVYRLQGVKINDKHIETILRQMLRKVEIAESGDSSFIKGDQMELTHVLVENERLSTEDKFVSKFTRVLLGITKASLSTESFISAASFQETTRVLTEAAVTGKRDYLRGLKENVVVGRLIPAGTGLAYHSERKRRREMDKPTRVSASEVEAALTEALNSSGN.

Positions 70, 72, 85, and 88 each coordinate Zn(2+). Mg(2+) contacts are provided by D460, D462, and D464. C814, C888, C895, and C898 together coordinate Zn(2+).

It belongs to the RNA polymerase beta' chain family. In terms of assembly, the RNAP catalytic core consists of 2 alpha, 1 beta, 1 beta' and 1 omega subunit. When a sigma factor is associated with the core the holoenzyme is formed, which can initiate transcription. Mg(2+) serves as cofactor. It depends on Zn(2+) as a cofactor.

The enzyme catalyses RNA(n) + a ribonucleoside 5'-triphosphate = RNA(n+1) + diphosphate. DNA-dependent RNA polymerase catalyzes the transcription of DNA into RNA using the four ribonucleoside triphosphates as substrates. The sequence is that of DNA-directed RNA polymerase subunit beta' from Pseudomonas syringae pv. syringae (strain B728a).